Here is a 422-residue protein sequence, read N- to C-terminus: UDP-N-acetylglucosamine 1-carboxyvinyltransferase 2 (422 aa).

22–23 is a binding site for phosphoenolpyruvate; it reads KN. Arg93 serves as a coordination point for UDP-N-acetyl-alpha-D-glucosamine. Residue Cys117 is the Proton donor of the active site. Cys117 carries the post-translational modification 2-(S-cysteinyl)pyruvic acid O-phosphothioketal. UDP-N-acetyl-alpha-D-glucosamine is bound by residues 122-126, Asp308, and Ile330; that span reads RPVDL.

Belongs to the EPSP synthase family. MurA subfamily.

It localises to the cytoplasm. It carries out the reaction phosphoenolpyruvate + UDP-N-acetyl-alpha-D-glucosamine = UDP-N-acetyl-3-O-(1-carboxyvinyl)-alpha-D-glucosamine + phosphate. It participates in cell wall biogenesis; peptidoglycan biosynthesis. Functionally, cell wall formation. Adds enolpyruvyl to UDP-N-acetylglucosamine. This is UDP-N-acetylglucosamine 1-carboxyvinyltransferase 2 from Legionella pneumophila (strain Lens).